Here is a 397-residue protein sequence, read N- to C-terminus: Phosphoglycerate kinase (397 aa).

Substrate contacts are provided by residues 19–21 (DFN), Arg35, 58–61 (HLGR), Arg117, and Arg150. ATP contacts are provided by residues Lys201, Glu323, and 349–352 (GGDS).

This sequence belongs to the phosphoglycerate kinase family. Monomer.

Its subcellular location is the cytoplasm. It carries out the reaction (2R)-3-phosphoglycerate + ATP = (2R)-3-phospho-glyceroyl phosphate + ADP. It functions in the pathway carbohydrate degradation; glycolysis; pyruvate from D-glyceraldehyde 3-phosphate: step 2/5. This Syntrophobacter fumaroxidans (strain DSM 10017 / MPOB) protein is Phosphoglycerate kinase.